The chain runs to 298 residues: Probable phosphite transport system-binding protein HtxB (298 aa).

An N-terminal signal peptide occupies residues 1–33 (MQVFTLFSKFKKALTRAILAFIATIIVCTPAQA).

The protein belongs to the phosphate/phosphite/phosphonate binding protein family.

Probably forms part of a binding-protein-dependent hypophosphite transporter. In Stutzerimonas stutzeri (Pseudomonas stutzeri), this protein is Probable phosphite transport system-binding protein HtxB (htxB).